We begin with the raw amino-acid sequence, 706 residues long: Cyclic nucleotide-gated ion channel 18 (706 aa).

The Cytoplasmic segment spans residues 1-53; it reads MNKIRSLRCLLPETITSASTAASNRGSDGSQFSVLWRHQILDPDSNIVTYWNH. The helical transmembrane segment at 54–74 threads the bilayer; that stretch reads VFLITSILALFLDPFYFYVPY. Over 75 to 86 the chain is Extracellular; the sequence is VGGPACLSIDIS. The helical transmembrane segment at 87 to 107 threads the bilayer; the sequence is LAATVTFFRTVADIFHLLHIF. The Cytoplasmic portion of the chain corresponds to 108–142; it reads MKFRTAFVARSSRVFGRGELVMDSREIAMRYLKTD. Residues 143 to 163 traverse the membrane as a helical segment; the sequence is FLIDVAAMLPLPQLVIWLVIP. The Extracellular segment spans residues 164–174; the sequence is AATNGTANHAN. The chain crosses the membrane as a helical span at residues 175–195; sequence STLALIVLVQYIPRSFIIFPL. At 196–217 the chain is on the cytoplasmic side; that stretch reads NQRIIKTTGFIAKTAWAGAAYN. Residues 218–238 traverse the membrane as a helical segment; it reads LLLYILASHVLGAMWYLSSIG. Topologically, residues 239 to 345 are extracellular; sequence RQFSCWSNVC…ITTSVYLGET (107 aa). A helical transmembrane segment spans residues 346 to 366; it reads LFCITICIFGLILFTLLIGNM. Residues 367 to 706 lie on the Cytoplasmic side of the membrane; the sequence is QSSLQSMSVR…PDFSIDKEDV (340 aa). Residues 449–579 and glutamate 520 contribute to the a nucleoside 3',5'-cyclic phosphate site; that span reads FFSQ…AFRY. Positions 565-580 are calmodulin-binding; the sequence is FKRLQSKKLQHAFRYY. Residues 585 to 614 enclose the IQ domain; it reads RAWGACFVQSAWRRYKRRKLAKELSLHESS. The tract at residues 661 to 706 is disordered; it reads ANTRRGTNQKASSSSTGKKDGSSTSLKMPQLFKPDEPDFSIDKEDV. Residues 693–706 are compositionally biased toward basic and acidic residues; sequence KPDEPDFSIDKEDV.

The protein belongs to the cyclic nucleotide-gated cation channel (TC 1.A.1.5) family. In terms of assembly, homomultimer. Interacts with CPK32. Expressed in pollen grains. Not detected in leaves, roots or root hairs.

It is found in the cell membrane. Its subcellular location is the cytoplasmic vesicle membrane. Its function is as follows. Cyclic nucleotide-gated ion channel required for directional pollen tube growth into the transmitting tract. Acts as a Ca(2+)-permeable divalent cation-selective channel inhibited by either lanthanum or gadolinium. Regulated by CPK32 to mediate Ca(2+) transport across the plasma membrane in response to Ca(2+) oscillation. The chain is Cyclic nucleotide-gated ion channel 18 from Arabidopsis thaliana (Mouse-ear cress).